Here is a 294-residue protein sequence, read N- to C-terminus: Bifunctional protein FolD 1 (294 aa).

NADP(+) is bound by residues Gly-165 to Ser-167, Ser-190, and Thr-231.

It belongs to the tetrahydrofolate dehydrogenase/cyclohydrolase family. In terms of assembly, homodimer.

The enzyme catalyses (6R)-5,10-methylene-5,6,7,8-tetrahydrofolate + NADP(+) = (6R)-5,10-methenyltetrahydrofolate + NADPH. It carries out the reaction (6R)-5,10-methenyltetrahydrofolate + H2O = (6R)-10-formyltetrahydrofolate + H(+). It participates in one-carbon metabolism; tetrahydrofolate interconversion. Its function is as follows. Catalyzes the oxidation of 5,10-methylenetetrahydrofolate to 5,10-methenyltetrahydrofolate and then the hydrolysis of 5,10-methenyltetrahydrofolate to 10-formyltetrahydrofolate. The sequence is that of Bifunctional protein FolD 1 from Paenarthrobacter aurescens (strain TC1).